Reading from the N-terminus, the 265-residue chain is Phosphonoacetaldehyde hydrolase (265 aa).

Asp10 (nucleophile) is an active-site residue. Asp10 and Ala12 together coordinate Mg(2+). The Schiff-base intermediate with substrate role is filled by Lys51. Asp184 is a binding site for Mg(2+).

This sequence belongs to the HAD-like hydrolase superfamily. PhnX family. Homodimer. It depends on Mg(2+) as a cofactor.

The enzyme catalyses phosphonoacetaldehyde + H2O = acetaldehyde + phosphate + H(+). Its function is as follows. Involved in phosphonate degradation. The sequence is that of Phosphonoacetaldehyde hydrolase from Latilactobacillus sakei subsp. sakei (strain 23K) (Lactobacillus sakei subsp. sakei).